A 174-amino-acid chain; its full sequence is Crossover junction endodeoxyribonuclease RuvC (174 aa).

Residues Asp8, Glu67, and Asp139 contribute to the active site. Mg(2+) contacts are provided by Asp8, Glu67, and Asp139.

The protein belongs to the RuvC family. Homodimer which binds Holliday junction (HJ) DNA. The HJ becomes 2-fold symmetrical on binding to RuvC with unstacked arms; it has a different conformation from HJ DNA in complex with RuvA. In the full resolvosome a probable DNA-RuvA(4)-RuvB(12)-RuvC(2) complex forms which resolves the HJ. It depends on Mg(2+) as a cofactor.

It is found in the cytoplasm. It carries out the reaction Endonucleolytic cleavage at a junction such as a reciprocal single-stranded crossover between two homologous DNA duplexes (Holliday junction).. Its function is as follows. The RuvA-RuvB-RuvC complex processes Holliday junction (HJ) DNA during genetic recombination and DNA repair. Endonuclease that resolves HJ intermediates. Cleaves cruciform DNA by making single-stranded nicks across the HJ at symmetrical positions within the homologous arms, yielding a 5'-phosphate and a 3'-hydroxyl group; requires a central core of homology in the junction. The consensus cleavage sequence is 5'-(A/T)TT(C/G)-3'. Cleavage occurs on the 3'-side of the TT dinucleotide at the point of strand exchange. HJ branch migration catalyzed by RuvA-RuvB allows RuvC to scan DNA until it finds its consensus sequence, where it cleaves and resolves the cruciform DNA. The protein is Crossover junction endodeoxyribonuclease RuvC of Pseudomonas paraeruginosa (strain DSM 24068 / PA7) (Pseudomonas aeruginosa (strain PA7)).